We begin with the raw amino-acid sequence, 123 residues long: uncharacterized protein (123 aa).

2 helical membrane passes run 55–77 (LLIH…STIL) and 92–114 (FFIN…TIVY).

Its subcellular location is the cell membrane. This is an uncharacterized protein from Pasteurella multocida (strain Pm70).